The sequence spans 327 residues: Putative ABC transporter ATP-binding protein MM_0887 (327 aa).

The tract at residues 1–44 is disordered; that stretch reads MSKSTPLKSSIIRADLPEQAEGRTGPETGKDPEKTGNSEGKTDT. Residues 28 to 44 are compositionally biased toward basic and acidic residues; that stretch reads TGKDPEKTGNSEGKTDT. Positions 47–282 constitute an ABC transporter domain; sequence IEIKDLCHRY…PALLRKAHLR (236 aa). 81-88 is an ATP binding site; that stretch reads GANGAGKS.

It belongs to the ABC transporter superfamily.

The protein resides in the cell membrane. In terms of biological role, probably part of an ABC transporter complex. Responsible for energy coupling to the transport system. The polypeptide is Putative ABC transporter ATP-binding protein MM_0887 (Methanosarcina mazei (strain ATCC BAA-159 / DSM 3647 / Goe1 / Go1 / JCM 11833 / OCM 88) (Methanosarcina frisia)).